Here is a 283-residue protein sequence, read N- to C-terminus: MNAWNTIYERFNPIAFSLGGIEVHWYGLAYACAIVVAFYMALRMIQKDPKRFPIERKEFESYFLWAELGIVLGARIGYVLIYEPNSSYYLTHFWQIFNPFDSHGNFIGIRGMSYHGGLVGFLIASYLYSRKDLKKLLIYLDLIAISLPLGYVFGRIGNFLNQELFGRIVPKDSHLGQIIGIMVDNELRYPSQLIEAFLEGVVVFLMVMWAKKHTKTHGLLIVVYGLGYSLMRFIAEFYREPDSQLGVYFLNLSMGQILSVFMVIVSLGILLYATKNSKKIKEE.

The next 7 helical transmembrane spans lie at 18 to 38, 62 to 82, 106 to 126, 136 to 156, 190 to 210, 218 to 238, and 252 to 272; these read LGGIEVHWYGLAYACAIVVAF, YFLWAELGIVLGARIGYVLIY, FIGIRGMSYHGGLVGFLIASY, LLIYLDLIAISLPLGYVFGRI, PSQLIEAFLEGVVVFLMVMWA, GLLIVVYGLGYSLMRFIAEFY, and LSMGQILSVFMVIVSLGILLY. R155 lines the a 1,2-diacyl-sn-glycero-3-phospho-(1'-sn-glycerol) pocket.

The protein belongs to the Lgt family.

Its subcellular location is the cell inner membrane. The catalysed reaction is L-cysteinyl-[prolipoprotein] + a 1,2-diacyl-sn-glycero-3-phospho-(1'-sn-glycerol) = an S-1,2-diacyl-sn-glyceryl-L-cysteinyl-[prolipoprotein] + sn-glycerol 1-phosphate + H(+). It functions in the pathway protein modification; lipoprotein biosynthesis (diacylglyceryl transfer). Catalyzes the transfer of the diacylglyceryl group from phosphatidylglycerol to the sulfhydryl group of the N-terminal cysteine of a prolipoprotein, the first step in the formation of mature lipoproteins. In Helicobacter pylori (strain J99 / ATCC 700824) (Campylobacter pylori J99), this protein is Phosphatidylglycerol--prolipoprotein diacylglyceryl transferase.